A 235-amino-acid polypeptide reads, in one-letter code: Large ribosomal subunit protein uL1 (235 aa).

It belongs to the universal ribosomal protein uL1 family. In terms of assembly, part of the 50S ribosomal subunit.

Its function is as follows. Binds directly to 23S rRNA. The L1 stalk is quite mobile in the ribosome, and is involved in E site tRNA release. In terms of biological role, protein L1 is also a translational repressor protein, it controls the translation of the L11 operon by binding to its mRNA. The polypeptide is Large ribosomal subunit protein uL1 (Desulfovibrio desulfuricans (strain ATCC 27774 / DSM 6949 / MB)).